A 349-amino-acid polypeptide reads, in one-letter code: MLDLSLPSGLRDLLPDHSAHLAELSSKLHDVFSRFGYRRVFLPTLERLDVVERGLSPAALADVMKFVEPGSGEVVAIRPDITPQIARLYAARPDALPSPARLCYDGPVLRAREARAGRPREVYQAGVELLGAGGASADAEALVLLARSLERVGLKAPRVEVGHARFAEAVMEAARLPERLRSAAWEALSRKDRAALAAAAAKGRGSAEAREAVPQLAGLFGDGALDRARAIARAVPEAAASLAETEAALRIARRRGVREVAVDLGEARGLGYYTGITFAGYAPGAGAAVARGGRYDGLLARFGRPGPAIGFAVDLEFATQALERVNGRGRGVRPRRASARGGRARARPR.

Residues Gly327–Arg349 are disordered. Basic residues predominate over residues Arg330 to Arg349.

This sequence belongs to the class-II aminoacyl-tRNA synthetase family. HisZ subfamily. Heteromultimer composed of HisG and HisZ subunits.

It localises to the cytoplasm. It functions in the pathway amino-acid biosynthesis; L-histidine biosynthesis; L-histidine from 5-phospho-alpha-D-ribose 1-diphosphate: step 1/9. Required for the first step of histidine biosynthesis. May allow the feedback regulation of ATP phosphoribosyltransferase activity by histidine. The protein is ATP phosphoribosyltransferase regulatory subunit of Anaeromyxobacter dehalogenans (strain 2CP-1 / ATCC BAA-258).